Here is a 486-residue protein sequence, read N- to C-terminus: UDP-N-acetylmuramoyl-L-alanyl-D-glutamate--2,6-diaminopimelate ligase (486 aa).

Ser-34 contributes to the UDP-N-acetyl-alpha-D-muramoyl-L-alanyl-D-glutamate binding site. 112–118 (GTAGKTS) contributes to the ATP binding site. UDP-N-acetyl-alpha-D-muramoyl-L-alanyl-D-glutamate is bound by residues 154 to 155 (TT), Ser-181, Gln-187, and Arg-189. Position 221 is an N6-carboxylysine (Lys-221). Residues Arg-385, 409 to 412 (DNPR), Gly-457, and Glu-461 each bind meso-2,6-diaminopimelate. A Meso-diaminopimelate recognition motif motif is present at residues 409-412 (DNPR).

It belongs to the MurCDEF family. MurE subfamily. Mg(2+) serves as cofactor. Carboxylation is probably crucial for Mg(2+) binding and, consequently, for the gamma-phosphate positioning of ATP.

Its subcellular location is the cytoplasm. It catalyses the reaction UDP-N-acetyl-alpha-D-muramoyl-L-alanyl-D-glutamate + meso-2,6-diaminopimelate + ATP = UDP-N-acetyl-alpha-D-muramoyl-L-alanyl-gamma-D-glutamyl-meso-2,6-diaminopimelate + ADP + phosphate + H(+). It functions in the pathway cell wall biogenesis; peptidoglycan biosynthesis. Catalyzes the addition of meso-diaminopimelic acid to the nucleotide precursor UDP-N-acetylmuramoyl-L-alanyl-D-glutamate (UMAG) in the biosynthesis of bacterial cell-wall peptidoglycan. In Rhizobium meliloti (strain 1021) (Ensifer meliloti), this protein is UDP-N-acetylmuramoyl-L-alanyl-D-glutamate--2,6-diaminopimelate ligase.